Reading from the N-terminus, the 102-residue chain is Large ribosomal subunit protein bL21 (102 aa).

The protein belongs to the bacterial ribosomal protein bL21 family. As to quaternary structure, part of the 50S ribosomal subunit. Contacts protein L20.

Functionally, this protein binds to 23S rRNA in the presence of protein L20. In Syntrophotalea carbinolica (strain DSM 2380 / NBRC 103641 / GraBd1) (Pelobacter carbinolicus), this protein is Large ribosomal subunit protein bL21.